The primary structure comprises 308 residues: Acyltransferase drtE (308 aa).

The AB hydrolase-1 domain maps to 35–159 (PALVMNPGYN…AAEAKDNFSR (125 aa)).

The protein belongs to the polyketide transferase af380 family.

The protein operates within secondary metabolite biosynthesis; terpenoid biosynthesis. In terms of biological role, acyltransferase; part of the gene cluster that mediates the biosynthesis of various drimane-type sesquiterpene esters, compounds that exhibit diverse biological activities and are widely present in eukaryotes. The pathway begins with the synthesis of the backbone drimenol by the terpene cyclase drtB using farnesyl pyrophosphate (FPP) as substrate. The cytochrome P450 monooxygenase drtD is then responsible for the hydroxylations at C-6, C-9 and C-12, as well as the oxidation of hydroxyl groups at C-6 and C-11 to a ketone and an aldehyde, respectively. Then, the biosynthesis can go in two directions, either the hydroxylated drimenol is further hydroxylated at C-2 and C-3 by an enzyme(s) not associated with the drt cluster, or the FAD-binding oxidoreductase drtC further oxidizes C-11 or C-12 to form the butyrolactone ring. DrtB, drtD and drtC are solely responsible for the formation of the different drimane structures observed during drimane sesquiterpenes biosynthesis. The polyketide synthase drtA synthesizes different lengths (C6 and C8) of PKS chains, which are then oxidized to varying degrees by the short-chain dehydrogenase drtF. Finally, these PKS chains are transferred onto drimane sesquiterpenes by the acyltransferase drtE, forming the sesquiterpene esters. In addition to the different fatty acyl-CoA chains produced by drtA, drtE is also able to use cinnamoyl-CoA as a substrate. In Aspergillus calidoustus, this protein is Acyltransferase drtE.